Reading from the N-terminus, the 576-residue chain is Peroxisomal targeting signal receptor (576 aa).

A Glycyl cysteine thioester (Cys-Gly) (interchain with G-Cter in ubiquitin) cross-link involves residue Cys10. Positions 11–33 are amphipathic helix 1 (AH1); the sequence is AAGSNPLAQFTKHTQHDTSLQQS. A Glycyl lysine isopeptide (Lys-Gly) (interchain with G-Cter in ubiquitin) cross-link involves residue Lys22. The segment at 58–75 is amphipathic helix 2 (AH2); sequence RQQMDQFMQQQNNPAFNF. 2 consecutive short sequence motifs (wxxxF/Y motif) follow at residues 100-104 and 128-132; these read WNQEF and WAQDF. Residues 176–195 form a disordered region; sequence AQMQQQNPAQAQTSEQSQTQ. Residues 196–200 carry the WxxxF/Y motif 3 motif; sequence WEDQF. Positions 224–240 are amphipathic helix 4 (AH4); it reads FEQVWDDIQVSYADVEL. The WxxxF/Y motif 4 signature appears at 249–253; that stretch reads WEKDF. 7 TPR repeats span residues 278-311, 312-345, 346-383, 384-421, 422-455, 456-489, and 490-523; these read PDAYEIGMRLMESGAKLSEAGLAFEAAVQQDPKH, VDAWLKLGEVQTQNEKESDGIAALEKCLELDPTN, LAALMTLAISYINDGYDNAAYATLERWIETKYPDIASR, ARSSNPDLDGGDRIEQNKRVTELFMKAAQLSPDVASMD, ADVQTGLGVLFYSMEEFDKTIDCFKAAIEVEPDK, ALNWNRLGAALANYNKPEEAVEAYSRALQLNPNF, and VRARYNLGVSFINMGRYKEAVEHLLTGISLHEVE.

This sequence belongs to the peroxisomal targeting signal receptor family. Interacts (via WxxxF/Y and LVxEF motifs) with PEX14; promoting translocation through the PEX13-PEX14 docking complex. Interacts with PEX8. A disulfide bond is created between Cys-10 and Cys-338 or Cys-444. Post-translationally, monoubiquitinated at Cys-10 by PEX2 during PEX5 passage through the retrotranslocation channel: monoubiquitination acts as a signal for PEX5 extraction and is required for proper export from peroxisomes and recycling. When PEX5 recycling is compromised, polyubiquitinated at Lys-22 by PEX10 during its passage through the retrotranslocation channel, leading to its degradation.

It localises to the peroxisome membrane. The protein resides in the cytoplasm. The protein localises to the cytosol. It is found in the peroxisome matrix. Its function is as follows. Receptor that mediates peroxisomal import of proteins containing a C-terminal PTS1-type tripeptide peroxisomal targeting signal (SKL-type). Binds to cargo proteins containing a PTS1 peroxisomal targeting signal in the cytosol, and translocates them into the peroxisome matrix by passing through the peroxisomal docking complex along with cargo proteins. PEX5 receptor is then retrotranslocated into the cytosol, leading to release of bound cargo in the peroxisome matrix, and reset for a subsequent peroxisome import cycle. Required for PEX7 ubiquitination. This chain is Peroxisomal targeting signal receptor, found in Komagataella phaffii (strain GS115 / ATCC 20864) (Yeast).